The following is a 483-amino-acid chain: 2-methylcitrate dehydratase (483 aa).

This sequence belongs to the PrpD family. As to quaternary structure, monomer.

It carries out the reaction (2S,3S)-2-methylcitrate = 2-methyl-cis-aconitate + H2O. The catalysed reaction is citrate = D-threo-isocitrate. It functions in the pathway organic acid metabolism; propanoate degradation. It participates in carbohydrate metabolism; tricarboxylic acid cycle; isocitrate from oxaloacetate: step 2/2. Involved in the catabolism of short chain fatty acids (SCFA) via the tricarboxylic acid (TCA)(acetyl degradation route) and via the 2-methylcitrate cycle I (propionate degradation route). Catalyzes the dehydration of 2-methylcitrate (2-MC) to yield the cis isomer of 2-methyl-aconitate. It is also able to catalyze the dehydration of citrate and the hydration of cis-aconitate at a lower rate. Due to its broad substrate specificity, it seems to be responsible for the residual aconitase activity of the acnAB-null mutant. This chain is 2-methylcitrate dehydratase, found in Escherichia coli (strain K12).